The following is a 424-amino-acid chain: Virion nicking-joining enzyme (424 aa).

2 consecutive PLD phosphodiesterase domains span residues 110–137 (LGGV…DWRS) and 320–346 (YSRV…TGNY).

The protein belongs to the orthopoxvirus OPG042 family.

Its subcellular location is the virion. DNA nicking enzyme that cleaves extruded cruciform DNA at its tip. Probably nicks viral hairpins. This Vaccinia virus (strain Western Reserve) (VACV) protein is Virion nicking-joining enzyme (OPG042).